Here is a 695-residue protein sequence, read N- to C-terminus: Elongation factor G (695 aa).

The 275-residue stretch at 8 to 282 folds into the tr-type G domain; the sequence is EKTRNIGIMA…AVLDYLPAPT (275 aa). Residues 17-24, 81-85, and 135-138 each bind GTP; these read AHIDAGKT, DTPGH, and NKMD.

Belongs to the TRAFAC class translation factor GTPase superfamily. Classic translation factor GTPase family. EF-G/EF-2 subfamily.

The protein localises to the cytoplasm. In terms of biological role, catalyzes the GTP-dependent ribosomal translocation step during translation elongation. During this step, the ribosome changes from the pre-translocational (PRE) to the post-translocational (POST) state as the newly formed A-site-bound peptidyl-tRNA and P-site-bound deacylated tRNA move to the P and E sites, respectively. Catalyzes the coordinated movement of the two tRNA molecules, the mRNA and conformational changes in the ribosome. In Listeria monocytogenes serotype 4b (strain CLIP80459), this protein is Elongation factor G.